Reading from the N-terminus, the 397-residue chain is Acetate kinase (397 aa).

Asn-8 is a binding site for Mg(2+). Lys-15 lines the ATP pocket. Residue Arg-89 participates in substrate binding. Residue Asp-146 is the Proton donor/acceptor of the active site. ATP contacts are provided by residues 206–210, 283–285, and 331–335; these read HVGNG, DMR, and GIGEN. Glu-383 serves as a coordination point for Mg(2+).

It belongs to the acetokinase family. As to quaternary structure, homodimer. Mg(2+) serves as cofactor. Requires Mn(2+) as cofactor.

The protein localises to the cytoplasm. It catalyses the reaction acetate + ATP = acetyl phosphate + ADP. It functions in the pathway metabolic intermediate biosynthesis; acetyl-CoA biosynthesis; acetyl-CoA from acetate: step 1/2. Its function is as follows. Catalyzes the formation of acetyl phosphate from acetate and ATP. Can also catalyze the reverse reaction. This is Acetate kinase from Streptococcus thermophilus (strain ATCC BAA-491 / LMD-9).